Reading from the N-terminus, the 220-residue chain is Redox-sensing transcriptional repressor Rex (220 aa).

A DNA-binding region (H-T-H motif) is located at residues 25–64 (WYLSNVKLLKQKGERYVSSTQISKEINIDASQIAKDLSYV). Residue 99–104 (GVGSLG) coordinates NAD(+).

It belongs to the transcriptional regulatory Rex family. In terms of assembly, homodimer.

It is found in the cytoplasm. Modulates transcription in response to changes in cellular NADH/NAD(+) redox state. The chain is Redox-sensing transcriptional repressor Rex from Bacteroides fragilis (strain ATCC 25285 / DSM 2151 / CCUG 4856 / JCM 11019 / LMG 10263 / NCTC 9343 / Onslow / VPI 2553 / EN-2).